We begin with the raw amino-acid sequence, 32 residues long: MTSISDSQIIVILLSVFITSILALRLGKELYQ.

Residues 4-26 (ISDSQIIVILLSVFITSILALRL) form a helical membrane-spanning segment.

This sequence belongs to the PsaM family.

The protein resides in the plastid. The protein localises to the chloroplast thylakoid membrane. This is Photosystem I reaction center subunit XII from Marchantia polymorpha (Common liverwort).